Here is a 405-residue protein sequence, read N- to C-terminus: Acetylornithine/succinyldiaminopimelate aminotransferase (405 aa).

Residues 108–109 and Phe-141 each bind pyridoxal 5'-phosphate; that span reads GT. Arg-144 contacts N(2)-acetyl-L-ornithine. Residue 226-229 participates in pyridoxal 5'-phosphate binding; it reads DEVQ. At Lys-255 the chain carries N6-(pyridoxal phosphate)lysine. Position 283 (Ser-283) interacts with N(2)-acetyl-L-ornithine. Thr-284 serves as a coordination point for pyridoxal 5'-phosphate.

The protein belongs to the class-III pyridoxal-phosphate-dependent aminotransferase family. ArgD subfamily. In terms of assembly, homodimer. The cofactor is pyridoxal 5'-phosphate.

The protein localises to the cytoplasm. The catalysed reaction is N(2)-acetyl-L-ornithine + 2-oxoglutarate = N-acetyl-L-glutamate 5-semialdehyde + L-glutamate. It carries out the reaction N-succinyl-(2S,6S)-2,6-diaminopimelate + 2-oxoglutarate = (S)-2-succinylamino-6-oxoheptanedioate + L-glutamate. The protein operates within amino-acid biosynthesis; L-arginine biosynthesis; N(2)-acetyl-L-ornithine from L-glutamate: step 4/4. It participates in amino-acid biosynthesis; L-lysine biosynthesis via DAP pathway; LL-2,6-diaminopimelate from (S)-tetrahydrodipicolinate (succinylase route): step 2/3. With respect to regulation, inhibited by gabaculine (Gcn). In terms of biological role, involved in both the arginine and lysine biosynthetic pathways. In Salmonella typhimurium (strain LT2 / SGSC1412 / ATCC 700720), this protein is Acetylornithine/succinyldiaminopimelate aminotransferase.